Consider the following 148-residue polypeptide: Single-stranded DNA-binding protein, mitochondrial (148 aa).

The N-terminal 16 residues, 1–16 (MFRRPALQVLRQFVRH), are a transit peptide targeting the mitochondrion. One can recognise an SSB domain in the interval 30–141 (LNRVQLLGRV…IIADNIVFLS (112 aa)). Ser-67 and Ser-79 each carry phosphoserine. N6-acetyllysine is present on Lys-113. Lys-122 is modified (N6-succinyllysine).

In terms of assembly, homotetramer. Interacts with MPG/AAG, through inhibition of its glycosylase activity it potentially prevents formation of DNA breaks in ssDNA, ensuring that base removal primarily occurs in dsDNA. Interacts with POLDIP2. Interacts with PRIMPOL.

Its subcellular location is the mitochondrion. It localises to the mitochondrion matrix. The protein resides in the mitochondrion nucleoid. In terms of biological role, binds preferentially and cooperatively to pyrimidine rich single-stranded DNA (ss-DNA). In vitro, required to maintain the copy number of mitochondrial DNA (mtDNA) and plays a crucial role during mtDNA replication by stimulating the activity of the replisome components POLG and TWNK at the replication fork. Promotes the activity of the gamma complex polymerase POLG, largely by organizing the template DNA and eliminating secondary structures to favor ss-DNA conformations that facilitate POLG activity. In addition it is able to promote the 5'-3' unwinding activity of the mtDNA helicase TWNK. May also function in mtDNA repair. The chain is Single-stranded DNA-binding protein, mitochondrial (SSBP1) from Oryctolagus cuniculus (Rabbit).